Reading from the N-terminus, the 153-residue chain is UPF0756 membrane protein LCABL_15860 (153 aa).

A run of 4 helical transmembrane segments spans residues 4-24, 52-72, 85-105, and 115-135; these read WLFL…SLII, WGVT…EIGF, WIAI…VGLL, and LVFG…GPVI.

This sequence belongs to the UPF0756 family.

It localises to the cell membrane. The chain is UPF0756 membrane protein LCABL_15860 from Lacticaseibacillus casei (strain BL23) (Lactobacillus casei).